A 620-amino-acid polypeptide reads, in one-letter code: Probable potassium transport system protein Kup 1 (620 aa).

12 consecutive transmembrane segments (helical) span residues G7–L27, V50–I70, M102–I122, P136–I156, F168–V188, L211–Y231, W246–I266, M284–I304, I336–F356, I368–L388, P393–A413, and I415–V435.

It belongs to the HAK/KUP transporter (TC 2.A.72) family.

It is found in the cell inner membrane. It catalyses the reaction K(+)(in) + H(+)(in) = K(+)(out) + H(+)(out). Functionally, transport of potassium into the cell. Likely operates as a K(+):H(+) symporter. The chain is Probable potassium transport system protein Kup 1 from Rhodopseudomonas palustris (strain ATCC BAA-98 / CGA009).